Reading from the N-terminus, the 249-residue chain is Glucosamine-6-phosphate deaminase (249 aa).

Asp67 acts as the Proton acceptor; for enolization step in catalysis. Catalysis depends on Asn136, which acts as the For ring-opening step. His138 acts as the Proton acceptor; for ring-opening step in catalysis. Glu143 functions as the For ring-opening step in the catalytic mechanism.

The protein belongs to the glucosamine/galactosamine-6-phosphate isomerase family. NagB subfamily.

The catalysed reaction is alpha-D-glucosamine 6-phosphate + H2O = beta-D-fructose 6-phosphate + NH4(+). It participates in amino-sugar metabolism; N-acetylneuraminate degradation; D-fructose 6-phosphate from N-acetylneuraminate: step 5/5. In terms of biological role, catalyzes the reversible isomerization-deamination of glucosamine 6-phosphate (GlcN6P) to form fructose 6-phosphate (Fru6P) and ammonium ion. This is Glucosamine-6-phosphate deaminase from Clostridium botulinum (strain Eklund 17B / Type B).